We begin with the raw amino-acid sequence, 938 residues long: Cyclin-dependent kinase-like 5 (938 aa).

One can recognise a Protein kinase domain in the interval 13–297; the sequence is FEILGVVGEG…TEQCLNHPTF (285 aa). Residues 19 to 27 and lysine 42 contribute to the ATP site; that span reads VGEGAYGVV. The Proton acceptor role is filled by aspartate 135. Disordered regions lie at residues 298 to 348, 382 to 566, 646 to 865, and 877 to 938; these read QTQR…DIQN, KTYQ…RHSK, SPQP…LTAQ, and HPLS…KWKQ. Polar residues-rich tracts occupy residues 319–331 and 382–402; these read ESST…QSTK and KTYQ…NNNI. Serine 407 carries the post-translational modification Phosphoserine. A compositionally biased stretch (basic and acidic residues) spans 407–417; it reads SPKEAKSKTEF. Polar residues-rich tracts occupy residues 434–462, 473–482, and 494–548; these read LKSS…QPSE, IPQSSRSPSY, and DSKS…SGRN. Residue serine 479 is modified to Phosphoserine. 2 stretches are compositionally biased toward basic and acidic residues: residues 549–559 and 679–704; these read NRNEGTLDSRR and QKSE…RHLY. Position 720 is a phosphoserine (serine 720). The span at 728–748 shows a compositional bias: polar residues; that stretch reads HENNVSTRVSSLPSDSSSGTN. Serine 761 bears the Phosphoserine mark. 2 stretches are compositionally biased toward basic and acidic residues: residues 769–778 and 817–827; these read DQLKEKEKQG and RPKEWRPEKLS. The segment covering 880–891 has biased composition (polar residues); the sequence is SQATGGSSNIRQ.

Belongs to the protein kinase superfamily. CMGC Ser/Thr protein kinase family. CDC2/CDKX subfamily. In terms of assembly, interacts with MECP2. Post-translationally, autophosphorylated.

It localises to the nucleus. The protein resides in the cytoplasm. Its subcellular location is the cytoskeleton. The protein localises to the cilium basal body. It is found in the microtubule organizing center. It localises to the centrosome. It catalyses the reaction L-seryl-[protein] + ATP = O-phospho-L-seryl-[protein] + ADP + H(+). The enzyme catalyses L-threonyl-[protein] + ATP = O-phospho-L-threonyl-[protein] + ADP + H(+). In terms of biological role, mediates phosphorylation of MECP2. May regulate ciliogenesis. The chain is Cyclin-dependent kinase-like 5 from Mus musculus (Mouse).